Here is a 285-residue protein sequence, read N- to C-terminus: Eukaryotic translation initiation factor 3 subunit F-2 (285 aa).

One can recognise an MPN domain in the interval 11–145 (VLIKPLVLFQ…TRLYCAVEIG (135 aa)).

This sequence belongs to the eIF-3 subunit F family. As to quaternary structure, component of the eukaryotic translation initiation factor 3 (eIF-3) complex. The eIF-3 complex interacts with pix.

It localises to the cytoplasm. Functionally, component of the eukaryotic translation initiation factor 3 (eIF-3) complex, which is involved in protein synthesis of a specialized repertoire of mRNAs and, together with other initiation factors, stimulates binding of mRNA and methionyl-tRNAi to the 40S ribosome. The eIF-3 complex specifically targets and initiates translation of a subset of mRNAs involved in cell proliferation. This is Eukaryotic translation initiation factor 3 subunit F-2 from Drosophila erecta (Fruit fly).